Consider the following 500-residue polypeptide: Maturase K (500 aa).

This sequence belongs to the intron maturase 2 family. MatK subfamily.

It is found in the plastid. It localises to the chloroplast. In terms of biological role, usually encoded in the trnK tRNA gene intron. Probably assists in splicing its own and other chloroplast group II introns. The polypeptide is Maturase K (Argentina anserina (Silverweed cinquefoil)).